Here is a 446-residue protein sequence, read N- to C-terminus: Chromosomal replication initiator protein DnaA (446 aa).

Residues 1–72 are domain I, interacts with DnaA modulators; it reads MENILDLWNQ…ADTIYELTGE (72 aa). Residues 72 to 109 are domain II; sequence EELSVKFVIPQNQDEENFLPKPQVKKAAKEEPSDFPQS. A domain III, AAA+ region region spans residues 110 to 326; the sequence is MLNPKYTFDT…GALIRVVAYS (217 aa). Residues Gly-154, Gly-156, Lys-157, and Thr-158 each contribute to the ATP site. Residues 327-446 are domain IV, binds dsDNA; sequence SLINKDINAD…QVKEIKELLK (120 aa).

Belongs to the DnaA family. As to quaternary structure, oligomerizes as a right-handed, spiral filament on DNA at oriC.

Its subcellular location is the cytoplasm. In terms of biological role, plays an essential role in the initiation and regulation of chromosomal replication. ATP-DnaA binds to the origin of replication (oriC) to initiate formation of the DNA replication initiation complex once per cell cycle. Binds the DnaA box (a 9 base pair repeat at the origin) and separates the double-stranded (ds)DNA. Forms a right-handed helical filament on oriC DNA; dsDNA binds to the exterior of the filament while single-stranded (ss)DNA is stabiized in the filament's interior. The ATP-DnaA-oriC complex binds and stabilizes one strand of the AT-rich DNA unwinding element (DUE), permitting loading of DNA polymerase. After initiation quickly degrades to an ADP-DnaA complex that is not apt for DNA replication. Binds acidic phospholipids. The protein is Chromosomal replication initiator protein DnaA of Bacillus velezensis (strain DSM 23117 / BGSC 10A6 / LMG 26770 / FZB42) (Bacillus amyloliquefaciens subsp. plantarum).